The following is a 236-amino-acid chain: Phosphatidylserine decarboxylase proenzyme (236 aa).

Residue Ser194 is the Schiff-base intermediate with substrate; via pyruvic acid of the active site. Pyruvic acid (Ser); by autocatalysis is present on Ser194.

The protein belongs to the phosphatidylserine decarboxylase family. PSD-A subfamily. Heterodimer of a large membrane-associated beta subunit and a small pyruvoyl-containing alpha subunit. Requires pyruvate as cofactor. Is synthesized initially as an inactive proenzyme. Formation of the active enzyme involves a self-maturation process in which the active site pyruvoyl group is generated from an internal serine residue via an autocatalytic post-translational modification. Two non-identical subunits are generated from the proenzyme in this reaction, and the pyruvate is formed at the N-terminus of the alpha chain, which is derived from the carboxyl end of the proenzyme. The post-translation cleavage follows an unusual pathway, termed non-hydrolytic serinolysis, in which the side chain hydroxyl group of the serine supplies its oxygen atom to form the C-terminus of the beta chain, while the remainder of the serine residue undergoes an oxidative deamination to produce ammonia and the pyruvoyl prosthetic group on the alpha chain.

The protein resides in the cell membrane. The enzyme catalyses a 1,2-diacyl-sn-glycero-3-phospho-L-serine + H(+) = a 1,2-diacyl-sn-glycero-3-phosphoethanolamine + CO2. The protein operates within phospholipid metabolism; phosphatidylethanolamine biosynthesis; phosphatidylethanolamine from CDP-diacylglycerol: step 2/2. Catalyzes the formation of phosphatidylethanolamine (PtdEtn) from phosphatidylserine (PtdSer). The polypeptide is Phosphatidylserine decarboxylase proenzyme (Rhodospirillum rubrum (strain ATCC 11170 / ATH 1.1.1 / DSM 467 / LMG 4362 / NCIMB 8255 / S1)).